The following is a 541-amino-acid chain: Beta-glucuronidase (541 aa).

Positions 1–20 (MHHHPITLLSLLLGAAQSIA) are cleaved as a signal peptide. N69, N115, and N157 each carry an N-linked (GlcNAc...) asparagine glycan. The active-site Proton donor is the E208. Residues N217, N291, and N304 are each glycosylated (N-linked (GlcNAc...) asparagine). The Nucleophile role is filled by E324. Residues N380, N426, N441, N483, and N512 are each glycosylated (N-linked (GlcNAc...) asparagine).

It belongs to the glycosyl hydrolase 79 family. Post-translationally, N-glycosylated.

It localises to the secreted. It carries out the reaction a beta-D-glucuronoside + H2O = D-glucuronate + an alcohol. Functionally, beta-glucuronidase that hydrolyzes beta-glucuronosyl and 4-O-methyl-beta-glucuronosyl residues of arabinogalactan-protein. Hydrolyzed heparan sulfate only very weakly. Has no activity on xylan from birchwood. Able to catalyze the transglycosylation of glucuronic acid (GlcA) residues from p-nitrophenyl-beta-glucuronic acid (PNP beta-GlcA) to various monosaccharide acceptors such as glucose, galactose and xylose. The protein is Beta-glucuronidase of Aspergillus niger (strain ATCC MYA-4892 / CBS 513.88 / FGSC A1513).